The primary structure comprises 191 residues: Adenine phosphoribosyltransferase (191 aa).

It belongs to the purine/pyrimidine phosphoribosyltransferase family. As to quaternary structure, homodimer.

It is found in the cytoplasm. The enzyme catalyses AMP + diphosphate = 5-phospho-alpha-D-ribose 1-diphosphate + adenine. Its pathway is purine metabolism; AMP biosynthesis via salvage pathway; AMP from adenine: step 1/1. Functionally, catalyzes a salvage reaction resulting in the formation of AMP, that is energically less costly than de novo synthesis. In Clavibacter sepedonicus (Clavibacter michiganensis subsp. sepedonicus), this protein is Adenine phosphoribosyltransferase.